The following is a 45-amino-acid chain: Proteinase inhibitor IIA (45 aa).

Intrachain disulfides connect C10–C24, C14–C35, and C20–C43.

It belongs to the protease inhibitor I20 (potato type II proteinase inhibitor) family.

Its subcellular location is the secreted. In terms of biological role, inhibits trypsin strongly and chymotrypsin temporarily. The sequence is that of Proteinase inhibitor IIA from Solanum tuberosum (Potato).